A 124-amino-acid chain; its full sequence is Small ribosomal subunit protein eS25 (124 aa).

The segment covering P1 to V22 has biased composition (basic and acidic residues). The tract at residues P1–G37 is disordered. The segment covering G27–G37 has biased composition (basic residues). N6-acetyllysine is present on K42. K51 carries the N6-acetyllysine; alternate modification. An N6-succinyllysine; alternate modification is found at K51. An N6-acetyllysine mark is found at K59 and K65. The residue at position 93 (K93) is an N6-acetyllysine; alternate. K93 bears the N6-succinyllysine; alternate mark.

Belongs to the eukaryotic ribosomal protein eS25 family. Component of the small ribosomal subunit.

Its subcellular location is the cytoplasm. Its function is as follows. Component of the small ribosomal subunit. The ribosome is a large ribonucleoprotein complex responsible for the synthesis of proteins in the cell. The protein is Small ribosomal subunit protein eS25 (RPS25) of Oryctolagus cuniculus (Rabbit).